The sequence spans 801 residues: Ferredoxin:CoB-CoM heterodisulfide reductase subunit A (801 aa).

FAD is bound at residue 149 to 172 (GGGIAGITAALNLADNGVSTVLVE). 4Fe-4S ferredoxin-type domains follow at residues 239-269 (KKPRYVKDSCTACGRCSRVCPVQVEDEFNCG) and 285-320 (PKIYCIDPDYCLQLNGEACGKCADACKNEAIDFSQK). 8 residues coordinate [4Fe-4S] cluster: Cys248, Cys251, Cys254, Cys258, Cys295, Cys303, Cys306, and Cys310. The segment at 382–409 (FSKASSDPTPATCDSRCEDSSDESQGTD) is disordered. 4Fe-4S ferredoxin-type domains are found at residues 606 to 634 (EIATINQLLCTRCGECLKCPFDALSVNES) and 635 to 664 (GRVVLDPLICTGCGYCTKLCGEGAVQIAGF). The [4Fe-4S] cluster site is built by Cys615, Cys618, Cys621, Cys624, Cys644, Cys647, Cys650, and Cys654.

This sequence belongs to the HdrA family. As to quaternary structure, the ferredoxin:CoB-CoM heterodisulfide reductase is composed of three subunits; HdrA1, HdrB1 and HdrC1. It depends on [4Fe-4S] cluster as a cofactor. Requires FAD as cofactor.

It localises to the cytoplasm. It carries out the reaction coenzyme B + coenzyme M + 2 oxidized [2Fe-2S]-[ferredoxin] = coenzyme M-coenzyme B heterodisulfide + 2 reduced [2Fe-2S]-[ferredoxin] + 2 H(+). It functions in the pathway cofactor metabolism; coenzyme M-coenzyme B heterodisulfide reduction; coenzyme B and coenzyme M from coenzyme M-coenzyme B heterodisulfide: step 1/1. Part of a complex that catalyzes the reversible reduction of CoM-S-S-CoB to the thiol-coenzymes H-S-CoM (coenzyme M) and H-S-CoB (coenzyme B). Probably involved in methylotrophic methanogenesis but not in aceticlastic methanogenesis. The sequence is that of Ferredoxin:CoB-CoM heterodisulfide reductase subunit A from Methanosarcina acetivorans (strain ATCC 35395 / DSM 2834 / JCM 12185 / C2A).